Consider the following 415-residue polypeptide: L-cysteine:1D-myo-inositol 2-amino-2-deoxy-alpha-D-glucopyranoside ligase (415 aa).

The segment at 1 to 20 (MQSWSETAVPSVPGQGPPLR) is disordered. Residue Cys-43 coordinates Zn(2+). L-cysteinyl-5'-AMP is bound by residues 43-46 (CGIT), Thr-58, and 81-83 (NVT). Positions 45-55 (ITPYDATHLGH) match the 'HIGH' region motif. The short motif at 187–192 (ERGGDP) is the 'ERGGDP' region element. L-cysteinyl-5'-AMP is bound at residue Trp-227. A Zn(2+)-binding site is contributed by Cys-231. 249–251 (GSD) serves as a coordination point for L-cysteinyl-5'-AMP. Residue His-256 participates in Zn(2+) binding. Residue Ile-283 participates in L-cysteinyl-5'-AMP binding. The 'KMSKS' region motif lies at 289 to 293 (KMSKS).

The protein belongs to the class-I aminoacyl-tRNA synthetase family. MshC subfamily. As to quaternary structure, monomer. Requires Zn(2+) as cofactor.

The enzyme catalyses 1D-myo-inositol 2-amino-2-deoxy-alpha-D-glucopyranoside + L-cysteine + ATP = 1D-myo-inositol 2-(L-cysteinylamino)-2-deoxy-alpha-D-glucopyranoside + AMP + diphosphate + H(+). Catalyzes the ATP-dependent condensation of GlcN-Ins and L-cysteine to form L-Cys-GlcN-Ins. The chain is L-cysteine:1D-myo-inositol 2-amino-2-deoxy-alpha-D-glucopyranoside ligase from Rhodococcus jostii (strain RHA1).